Reading from the N-terminus, the 123-residue chain is Large ribosomal subunit protein uL14 (123 aa).

This sequence belongs to the universal ribosomal protein uL14 family. In terms of assembly, part of the 50S ribosomal subunit. Forms a cluster with proteins L3 and L19. In the 70S ribosome, L14 and L19 interact and together make contacts with the 16S rRNA in bridges B5 and B8.

Binds to 23S rRNA. Forms part of two intersubunit bridges in the 70S ribosome. The chain is Large ribosomal subunit protein uL14 from Pectobacterium atrosepticum (strain SCRI 1043 / ATCC BAA-672) (Erwinia carotovora subsp. atroseptica).